Here is a 488-residue protein sequence, read N- to C-terminus: Glutamyl-tRNA(Gln) amidotransferase subunit A (488 aa).

Catalysis depends on charge relay system residues Lys77 and Ser152. The Acyl-ester intermediate role is filled by Ser176.

The protein belongs to the amidase family. GatA subfamily. In terms of assembly, heterotrimer of A, B and C subunits.

It catalyses the reaction L-glutamyl-tRNA(Gln) + L-glutamine + ATP + H2O = L-glutaminyl-tRNA(Gln) + L-glutamate + ADP + phosphate + H(+). In terms of biological role, allows the formation of correctly charged Gln-tRNA(Gln) through the transamidation of misacylated Glu-tRNA(Gln) in organisms which lack glutaminyl-tRNA synthetase. The reaction takes place in the presence of glutamine and ATP through an activated gamma-phospho-Glu-tRNA(Gln). In Streptococcus pyogenes serotype M1, this protein is Glutamyl-tRNA(Gln) amidotransferase subunit A.